An 857-amino-acid chain; its full sequence is MQEKYLPSEIERAGQARWTADQTYRAADASDRPKYYCLSMFPYPSGKLHMGHVRNYTIGDVLARYHALRGFNVMQPMGWDAFGLPAENAAIANGVPPAQWTYANIDHMRTQLQALGFAIDWSRELATCKPDYYRWEQWLFTRLFEKGVIYKKMATVNWDPVDQTVLANEQVIDGRGWRSGALVEKRDIPMYFFRITQYADELLSGLDTLPGWPERVKTMQANWIGKSTGVRLAFPYELDGSQEKLWVFTTRADTLMGVTFVAVAAEHPLAARAAENNPELAAFVAECKQGSVAEADMATMEKKGMDTGFKVTHPLTGEEVPVWVGNYVLMSYGEGAVMAVPAHDERDFGFAKKYDLPIKQVIGVDGETFSLDAWAEWYGDKTRGQCVNSGKYDRLGYEAAVDAIAADLAAKGLGEKKTQFRLRDWGISRQRYWGCPIPIIHCETCGDVPVPAEQLPVVLPEDVVPDGSGNPLNKRADFVNCTCPACGAPARRETDTMDTFVESSWYYARYACPDYADGMLDARADQWLPVDQYIGGIEHAILHLLYARFFHKLMRDEGLVASDEPFANLLTQGMVVADTYYREDAGGKKTWFNPADVETKDGVATLRADGKPVVVGGTEKMSKSKNNGVDPQALIDQYGADTARLFTMFAAPPEQSLEWSDAGVEGAHRFLRRLWKTVYEHVQAGPVVTRAGGALPEPLKALRRQLHQTIQKVGDDIERRKQFNTAIAAVMELMNALAKLDGMDADTRAVRQETLEAVAVLLAPIVPHVGEAIHAELRPGAAMRWPEVDAAALVQDEIELMLQVNGKLRGQIRVAAGADKPAIEAAALASEAVQKYLAGQTPKKVVVVPGRLVNIVA.

The 'HIGH' region signature appears at 42 to 52 (PYPSGKLHMGH). The 'KMSKS' region motif lies at 620 to 624 (KMSKS). Position 623 (lysine 623) interacts with ATP.

Belongs to the class-I aminoacyl-tRNA synthetase family.

The protein resides in the cytoplasm. The enzyme catalyses tRNA(Leu) + L-leucine + ATP = L-leucyl-tRNA(Leu) + AMP + diphosphate. The polypeptide is Leucine--tRNA ligase (Thiobacillus denitrificans (strain ATCC 25259 / T1)).